Reading from the N-terminus, the 444-residue chain is tRNA-2-methylthio-N(6)-dimethylallyladenosine synthase (444 aa).

The MTTase N-terminal domain maps to 7-121 (KTFHVKSFGC…LPELIARAER (115 aa)). Cys-16, Cys-52, Cys-84, Cys-158, Cys-162, and Cys-165 together coordinate [4Fe-4S] cluster. Positions 144-376 (GNQRPTAFLT…QALLNEQQQA (233 aa)) constitute a Radical SAM core domain. Residues 379-441 (EATVGRTTRL…PNSLGAEPLM (63 aa)) enclose the TRAM domain.

This sequence belongs to the methylthiotransferase family. MiaB subfamily. In terms of assembly, monomer. The cofactor is [4Fe-4S] cluster.

It localises to the cytoplasm. The enzyme catalyses N(6)-dimethylallyladenosine(37) in tRNA + (sulfur carrier)-SH + AH2 + 2 S-adenosyl-L-methionine = 2-methylsulfanyl-N(6)-dimethylallyladenosine(37) in tRNA + (sulfur carrier)-H + 5'-deoxyadenosine + L-methionine + A + S-adenosyl-L-homocysteine + 2 H(+). Functionally, catalyzes the methylthiolation of N6-(dimethylallyl)adenosine (i(6)A), leading to the formation of 2-methylthio-N6-(dimethylallyl)adenosine (ms(2)i(6)A) at position 37 in tRNAs that read codons beginning with uridine. The sequence is that of tRNA-2-methylthio-N(6)-dimethylallyladenosine synthase from Sphingopyxis alaskensis (strain DSM 13593 / LMG 18877 / RB2256) (Sphingomonas alaskensis).